The sequence spans 177 residues: Large ribosomal subunit protein uL6 (177 aa).

This sequence belongs to the universal ribosomal protein uL6 family. Part of the 50S ribosomal subunit.

Functionally, this protein binds to the 23S rRNA, and is important in its secondary structure. It is located near the subunit interface in the base of the L7/L12 stalk, and near the tRNA binding site of the peptidyltransferase center. In Methanocella arvoryzae (strain DSM 22066 / NBRC 105507 / MRE50), this protein is Large ribosomal subunit protein uL6.